Consider the following 780-residue polypeptide: Tricorn protease-interacting factor F3 (780 aa).

Residues Glu-101 and 230–234 each bind substrate; that span reads GAMEN. His-265 serves as a coordination point for Zn(2+). Residue Glu-266 is the Proton acceptor of the active site. Positions 269 and 288 each coordinate Zn(2+).

Belongs to the peptidase M1 family. In terms of assembly, part of the tricorn proteolytic complex. Zn(2+) serves as cofactor.

It localises to the cytoplasm. In terms of biological role, proteases F1, F2 and F3 degrade oligopeptides produced by Tricorn (themselves probably produced by the proteasome), yielding free amino acids. In Thermoplasma acidophilum (strain ATCC 25905 / DSM 1728 / JCM 9062 / NBRC 15155 / AMRC-C165), this protein is Tricorn protease-interacting factor F3 (trf3).